Reading from the N-terminus, the 1118-residue chain is Constitutive coactivator of PPAR-gamma-like protein 1 (1118 aa).

The segment at 339-405 is interaction with YES1, SRC and FYN; that stretch reads PPHYLAARPG…SLSEPAPLTL (67 aa). Residues 374–533 are disordered; that stretch reads AKPVAPQVPS…GTVQPIPCLL (160 aa). Residues 376–396 show a composition bias toward low complexity; sequence PVAPQVPSPGGAPGQGPYPYS. Composition is skewed to polar residues over residues 405-420 and 435-447; these read LDTS…SYSN and SPIN…SPNH. Residues 481–502 are compositionally biased toward basic and acidic residues; that stretch reads GWEKTGSHSEPQARGDPGDQTK. Residues 503 to 514 show a composition bias toward polar residues; that stretch reads AEGSSTASSGSQ. Residue Thr655 is modified to Phosphothreonine. The RNA binding stretch occupies residues 829–1118; the sequence is ADQAAKVEKM…LEAAVLNKEE (290 aa). Arg873, Arg884, and Arg886 each carry omega-N-methylarginine. The segment at 921 to 945 is disordered; that stretch reads AFSGSDSSRTSKSQGGVQPIPSQGG. Residues 924–936 show a composition bias toward polar residues; it reads GSDSSRTSKSQGG. Position 932 is an N6-acetyllysine (Lys932). Ser960 is modified (phosphoserine). Residues Arg982 and Arg986 each carry the omega-N-methylarginine modification. Ser1023 carries the phosphoserine modification. The segment at 1025 to 1102 is disordered; the sequence is EEVAKELKSK…HLNALSTDSA (78 aa). Positions 1026 to 1037 are enriched in basic and acidic residues; the sequence is EVAKELKSKSGE. Positions 1038–1051 are enriched in low complexity; sequence SKSSAMSSDGSLAE. Residues Ser1044, Ser1045, and Ser1048 each carry the phosphoserine modification. Polar residues predominate over residues 1076–1101; sequence HSESALNNDSKTCNTNPHLNALSTDS.

It belongs to the constitutive coactivator of PPAR-gamma family. Interacts with PURA. Interacts with SRC family protein kinases YES1, SRC and FYN. Upon tyrosine phosphorylation, interacts with PIK3R1. Interacts with IGF2BP1/IMP-1 in an RNA-dependent manner. In terms of processing, arg-982 is dimethylated, probably to asymmetric dimethylarginine. Post-translationally, phosphorylated on tyrosine by SRC family protein kinases upon oxidative stress, for instance following UV irradiation. As to expression, widely expressed. In gastric mucosa, detected in the bottom region of the foveolar epithelium (at protein level).

It is found in the cytoplasm. It localises to the cell membrane. Functionally, component of the oxidative stress-induced survival signaling. May regulate the activation of SRC family protein kinases. May act as a scaffolding protein enabling SRC family protein kinases to phosphorylate and activate PI3-kinase. Binds IGF2 RNA and promotes the production of IGF2 protein. This chain is Constitutive coactivator of PPAR-gamma-like protein 1 (FAM120A), found in Homo sapiens (Human).